The primary structure comprises 130 residues: Small ribosomal subunit protein uS11c (130 aa).

The protein belongs to the universal ribosomal protein uS11 family. As to quaternary structure, part of the 30S ribosomal subunit.

The protein resides in the plastid. It localises to the chloroplast. The polypeptide is Small ribosomal subunit protein uS11c (Chaetosphaeridium globosum (Charophycean green alga)).